A 74-amino-acid chain; its full sequence is Anaphase-promoting complex subunit 13 (74 aa).

The interval 33–56 (LSELPEPEQDNGGTTESVKEQEMK) is disordered.

It belongs to the APC13 family. In terms of assembly, the mammalian APC/C is composed at least of 14 distinct subunits ANAPC1, ANAPC2, CDC27/APC3, ANAPC4, ANAPC5, CDC16/APC6, ANAPC7, CDC23/APC8, ANAPC10, ANAPC11, CDC26/APC12, ANAPC13, ANAPC15 and ANAPC16 that assemble into a complex of at least 19 chains with a combined molecular mass of around 1.2 MDa; APC/C interacts with FZR1 and FBXO5.

The protein resides in the nucleus. It participates in protein modification; protein ubiquitination. Functionally, component of the anaphase promoting complex/cyclosome (APC/C), a cell cycle-regulated E3 ubiquitin ligase that controls progression through mitosis and the G1 phase of the cell cycle. The APC/C complex acts by mediating ubiquitination and subsequent degradation of target proteins: it mainly mediates the formation of 'Lys-11'-linked polyubiquitin chains and, to a lower extent, the formation of 'Lys-48'- and 'Lys-63'-linked polyubiquitin chains. The APC/C complex catalyzes assembly of branched 'Lys-11'-/'Lys-48'-linked branched ubiquitin chains on target proteins. The protein is Anaphase-promoting complex subunit 13 (Anapc13) of Mus musculus (Mouse).